The primary structure comprises 175 residues: Peptide deformylase (175 aa).

Residues C98 and H140 each contribute to the Fe cation site. E141 is a catalytic residue. H144 serves as a coordination point for Fe cation.

Belongs to the polypeptide deformylase family. It depends on Fe(2+) as a cofactor.

The catalysed reaction is N-terminal N-formyl-L-methionyl-[peptide] + H2O = N-terminal L-methionyl-[peptide] + formate. Removes the formyl group from the N-terminal Met of newly synthesized proteins. Requires at least a dipeptide for an efficient rate of reaction. N-terminal L-methionine is a prerequisite for activity but the enzyme has broad specificity at other positions. This Nitrobacter hamburgensis (strain DSM 10229 / NCIMB 13809 / X14) protein is Peptide deformylase.